A 322-amino-acid chain; its full sequence is Sideroflexin-1 (322 aa).

Serine 2 bears the N-acetylserine mark. Residues 2-102 (SGELPPNINI…MSAQVPMNMT (101 aa)) lie on the Mitochondrial matrix side of the membrane. A helical transmembrane segment spans residues 103–120 (ITGCMMTFYRTTPAVLFW). Residues 121–146 (QWVNQSFNAVVNYTNRSGDAPLTVNE) are Mitochondrial intermembrane-facing. Residues 147-167 (LGTAYVSATTGAVATALGLNA) form a helical membrane-spanning segment. At 168–174 (LTKRVSP) the chain is on the mitochondrial matrix side. A helical membrane pass occupies residues 175 to 195 (LVGRFVPFAAVAAANCINIPL). Residues 196 to 228 (MRQRELKVGIPVTDENGNRLGESASAAKQAITQ) are Mitochondrial intermembrane-facing. Residues 229-249 (VVVSRILMAAPGMAIPPFIMN) traverse the membrane as a helical segment. Over 250 to 266 (TLEKKAFLKRFPWMSAP) the chain is Mitochondrial matrix. A helical transmembrane segment spans residues 267–287 (VQVGIVGFCLVFATPLCCALF). Residues 288–322 (PQKSSMSVTSLEAELQARIRETYPELRRVYFNKGL) lie on the Mitochondrial intermembrane side of the membrane.

The protein belongs to the sideroflexin family.

Its subcellular location is the mitochondrion inner membrane. The enzyme catalyses L-serine(in) = L-serine(out). It catalyses the reaction L-alanine(in) = L-alanine(out). The catalysed reaction is L-cysteine(in) = L-cysteine(out). In terms of biological role, amino acid transporter importing serine, an essential substrate of the mitochondrial branch of the one-carbon pathway, into mitochondria. Mitochondrial serine is then converted to glycine and formate, which exits to the cytosol where it is used to generate the charged folates that serve as one-carbon donors. May also transport other amino acids including alanine and cysteine. This is Sideroflexin-1 (SFXN1) from Ovis aries (Sheep).